The chain runs to 357 residues: Aurora kinase A- and ninein-interacting protein (357 aa).

A compositionally biased stretch (polar residues) spans 71-91 (LQPGKTNGSDQKSVSSHTESQ). The segment at 71–98 (LQPGKTNGSDQKSVSSHTESQINKESKK) is disordered. The tract at residues 187–357 (RKEEKGDSAR…EGNQVIRHQF (171 aa)) is interaction with AURKA. Phosphoserine occurs at positions 267 and 292. The tract at residues 281–357 (KDSWSQLFTE…EGNQVIRHQF (77 aa)) is interaction with RBBP8/CtIP.

This sequence belongs to the AUNIP family. In terms of assembly, interacts (via C-terminus) with AURKA (via C-terminus). Interacts (via N-terminus) with NIN; this interaction blocks NIN phosphorylation by both AURKA and GSK3B. Identified in a complex with NIN and AURKA. Interacts with RBBP8/CtIP. Expressed in heart, skeletal muscles, placenta and testis.

It is found in the nucleus. It localises to the chromosome. Its subcellular location is the cytoplasm. The protein localises to the cytoskeleton. The protein resides in the microtubule organizing center. It is found in the centrosome. It localises to the spindle pole. DNA-binding protein that accumulates at DNA double-strand breaks (DSBs) following DNA damage and promotes DNA resection and homologous recombination. Serves as a sensor of DNA damage: binds DNA with a strong preference for DNA substrates that mimic structures generated at stalled replication forks, and anchors RBBP8/CtIP to DSB sites to promote DNA end resection and ensuing homologous recombination repair. Inhibits non-homologous end joining (NHEJ). Required for the dynamic movement of AURKA at the centrosomes and spindle apparatus during the cell cycle. This is Aurora kinase A- and ninein-interacting protein from Homo sapiens (Human).